The following is a 346-amino-acid chain: Fe(3+) ions import ATP-binding protein FbpC 1 (346 aa).

An ABC transporter domain is found at 5–235 (LEVDGVDKSF…PIDVPTAEFI (231 aa)). Position 37–44 (37–44 (GPSGCGKT)) interacts with ATP.

The protein belongs to the ABC transporter superfamily. Fe(3+) ion importer (TC 3.A.1.10) family. As to quaternary structure, the complex is composed of two ATP-binding proteins (FbpC), two transmembrane proteins (FbpB) and a solute-binding protein (FbpA).

The protein localises to the cell membrane. The enzyme catalyses Fe(3+)(out) + ATP + H2O = Fe(3+)(in) + ADP + phosphate + H(+). Functionally, part of the ABC transporter complex FbpABC involved in Fe(3+) ions import. Responsible for energy coupling to the transport system. The chain is Fe(3+) ions import ATP-binding protein FbpC 1 from Rhodococcus jostii (strain RHA1).